The sequence spans 433 residues: Acetyl-CoA acetyltransferase erg10A, mitochondrial (433 aa).

The N-terminal 34 residues, 1–34 (MAIQTTTGLAARLVAKRATFPASRRNFSASRSAL), are a transit peptide targeting the mitochondrion. The Acyl-thioester intermediate role is filled by cysteine 124. K(+) is bound at residue tyrosine 219. CoA-binding residues include asparagine 229 and lysine 262. Alanine 280 is a binding site for K(+). Serine 284 serves as a coordination point for CoA. Active-site proton acceptor residues include histidine 387 and cysteine 415. Residue asparagine 416 participates in chloride binding.

Belongs to the thiolase-like superfamily. Thiolase family. As to quaternary structure, homotetramer. Requires K(+) as cofactor.

It localises to the mitochondrion. It catalyses the reaction 2 acetyl-CoA = acetoacetyl-CoA + CoA. It participates in metabolic intermediate biosynthesis; (R)-mevalonate biosynthesis; (R)-mevalonate from acetyl-CoA: step 1/3. Functionally, mitochondrial acetyl-CoA acetyltransferase that catalyzes both the formation and degradation of acetoacetyl-CoA. Has no overlapping function with erg10B and seems not to be involved in ergosterol biosynthesis. Plays an important role in growth, morphogenesis and maintaining mitochondrial function including the response to oxidative stresses. The polypeptide is Acetyl-CoA acetyltransferase erg10A, mitochondrial (Aspergillus fumigatus (strain ATCC MYA-4609 / CBS 101355 / FGSC A1100 / Af293) (Neosartorya fumigata)).